Reading from the N-terminus, the 330-residue chain is Beta-ketoacyl-[acyl-carrier-protein] synthase III (330 aa).

Residues Cys-114 and His-257 contribute to the active site. Residues 258–262 form an ACP-binding region; it reads QANLR. The active site involves Asn-287.

This sequence belongs to the thiolase-like superfamily. FabH family. As to quaternary structure, homodimer.

The protein localises to the cytoplasm. It catalyses the reaction malonyl-[ACP] + acetyl-CoA + H(+) = 3-oxobutanoyl-[ACP] + CO2 + CoA. Its pathway is lipid metabolism; fatty acid biosynthesis. Its function is as follows. Catalyzes the condensation reaction of fatty acid synthesis by the addition to an acyl acceptor of two carbons from malonyl-ACP. Catalyzes the first condensation reaction which initiates fatty acid synthesis and may therefore play a role in governing the total rate of fatty acid production. Possesses both acetoacetyl-ACP synthase and acetyl transacylase activities. Its substrate specificity determines the biosynthesis of branched-chain and/or straight-chain of fatty acids. The sequence is that of Beta-ketoacyl-[acyl-carrier-protein] synthase III from Nitratidesulfovibrio vulgaris (strain ATCC 29579 / DSM 644 / CCUG 34227 / NCIMB 8303 / VKM B-1760 / Hildenborough) (Desulfovibrio vulgaris).